A 330-amino-acid chain; its full sequence is Phosphate acyltransferase (330 aa).

It belongs to the PlsX family. In terms of assembly, homodimer. Probably interacts with PlsY.

It localises to the cytoplasm. The catalysed reaction is a fatty acyl-[ACP] + phosphate = an acyl phosphate + holo-[ACP]. Its pathway is lipid metabolism; phospholipid metabolism. In terms of biological role, catalyzes the reversible formation of acyl-phosphate (acyl-PO(4)) from acyl-[acyl-carrier-protein] (acyl-ACP). This enzyme utilizes acyl-ACP as fatty acyl donor, but not acyl-CoA. This chain is Phosphate acyltransferase, found in Streptococcus pneumoniae (strain JJA).